The following is an 852-amino-acid chain: MMAKSALRENGTNSETFRQRFRRFHYQEVAGPREAFSQLWELCCRWLRPEVRTKEQIVELLVLEQFLTVLPGEIQNWVQEQCPENGEEAVTLVEDLEREPGRPRSSVTVSVKGQEVRLEKMTPPKSSQELLSVRQESVEPQPRGVPKKERARSPDLGPQEQMNPKEKLKPFQRSGLPFPKSGVVSRLEQGEPWIPDLLGSKEKELPSGSHIGDRRVHADLLPSKKDRRSWVEQDHWSFEDEKVAGVHWGYEETRTLLAILSQTEFYEALRNCHRNSQVYGAVAERLREYGFLRTLEQCRTKFKGLQKSYRKVKSGHPPETCPFFEEMEALMSAQVIALPSNGLEAAASHSGLVGSDAETEEPGQRGWQHEEGAEEAVAQESDSDDMDLEATPQDPNSAAPVVFRSPGGVHWGYEETKTYLAILSETQFYEALRNCHRNSQLYGAVAERLWEYGFLRTPEQCRTKFKSLQTSYRKVKNGQAPETCPFFEEMDALVSVRVAAPPNDGQEETASCPVQGTSEAEAQKQAEEADEATEEDSDDDEEDTEIPPGAVITRAPVLFQSPRGFEAGFENEDNSKRDISEEVQLHRTLLARSERKIPRYLHQGKGNESDCRSGRQWAKTSGEKRGKLTLPEKSLSEVLSQQRPCLGERPYKYLKYSKSFGPNSLLMHQVSHQVENPYKCADCGKSFSRSARLIRHRRIHTGEKPYKCLDCGKSFRDSSNFITHRRIHTGEKPYQCGECGKCFNQSSSLIIHQRTHTGEKPYQCEECGKSFNNSSHFSAHRRIHTGERPHVCPDCGKSFSKSSDLRAHHRTHTGEKPYGCHDCGKCFSKSSALNKHGEIHAREKLLTQSAPK.

The 83-residue stretch at 18–100 folds into the SCAN box domain; sequence RQRFRRFHYQ…TLVEDLEREP (83 aa). 3 disordered regions span residues 96-182, 347-400, and 502-557; these read LERE…PKSG, ASHS…SAAP, and PNDG…RAPV. A Glycyl lysine isopeptide (Lys-Gly) (interchain with G-Cter in SUMO2) cross-link involves residue Lys112. A Phosphoserine modification is found at Ser153. Residue Lys180 forms a Glycyl lysine isopeptide (Lys-Gly) (interchain with G-Cter in SUMO2) linkage. Residues 508–517 show a composition bias toward polar residues; sequence ETASCPVQGT. Acidic residues predominate over residues 528-545; sequence EADEATEEDSDDDEEDTE. Ser561 carries the post-translational modification Phosphoserine. Lys576 participates in a covalent cross-link: Glycyl lysine isopeptide (Lys-Gly) (interchain with G-Cter in SUMO2). The tract at residues 603-625 is disordered; that stretch reads QGKGNESDCRSGRQWAKTSGEKR. Lys652 is covalently cross-linked (Glycyl lysine isopeptide (Lys-Gly) (interchain with G-Cter in SUMO2)). 6 C2H2-type zinc fingers span residues 678-700, 706-728, 734-756, 762-784, 790-812, and 818-840; these read YKCA…RRIH, YKCL…RRIH, YQCG…QRTH, YQCE…RRIH, HVCP…HRTH, and YGCH…GEIH.

The protein belongs to the krueppel C2H2-type zinc-finger protein family.

Its subcellular location is the nucleus. Its function is as follows. May be involved in transcriptional regulation. In Homo sapiens (Human), this protein is Zinc finger and SCAN domain-containing protein 29 (ZSCAN29).